Reading from the N-terminus, the 347-residue chain is NADH-quinone oxidoreductase subunit H (347 aa).

A run of 8 helical transmembrane segments spans residues Ile25–Met45, Phe95–Ile115, Ile128–Gly148, Ile168–Phe188, Gly200–Val220, Phe251–Phe271, Phe284–Leu304, and Val324–Ser344.

It belongs to the complex I subunit 1 family. In terms of assembly, NDH-1 is composed of 14 different subunits. Subunits NuoA, H, J, K, L, M, N constitute the membrane sector of the complex.

It localises to the cell inner membrane. The catalysed reaction is a quinone + NADH + 5 H(+)(in) = a quinol + NAD(+) + 4 H(+)(out). NDH-1 shuttles electrons from NADH, via FMN and iron-sulfur (Fe-S) centers, to quinones in the respiratory chain. The immediate electron acceptor for the enzyme in this species is believed to be ubiquinone. Couples the redox reaction to proton translocation (for every two electrons transferred, four hydrogen ions are translocated across the cytoplasmic membrane), and thus conserves the redox energy in a proton gradient. This subunit may bind ubiquinone. The polypeptide is NADH-quinone oxidoreductase subunit H (Psychrobacter cryohalolentis (strain ATCC BAA-1226 / DSM 17306 / VKM B-2378 / K5)).